We begin with the raw amino-acid sequence, 128 residues long: Large ribosomal subunit protein bL12 (128 aa).

The protein belongs to the bacterial ribosomal protein bL12 family. As to quaternary structure, homodimer. Part of the ribosomal stalk of the 50S ribosomal subunit. Forms a multimeric L10(L12)X complex, where L10 forms an elongated spine to which 2 to 4 L12 dimers bind in a sequential fashion. Binds GTP-bound translation factors.

In terms of biological role, forms part of the ribosomal stalk which helps the ribosome interact with GTP-bound translation factors. Is thus essential for accurate translation. This is Large ribosomal subunit protein bL12 from Kocuria rhizophila (strain ATCC 9341 / DSM 348 / NBRC 103217 / DC2201).